The sequence spans 100 residues: Urease subunit gamma (100 aa).

The protein belongs to the urease gamma subunit family. In terms of assembly, heterotrimer of UreA (gamma), UreB (beta) and UreC (alpha) subunits. Three heterotrimers associate to form the active enzyme.

Its subcellular location is the cytoplasm. It catalyses the reaction urea + 2 H2O + H(+) = hydrogencarbonate + 2 NH4(+). Its pathway is nitrogen metabolism; urea degradation; CO(2) and NH(3) from urea (urease route): step 1/1. The chain is Urease subunit gamma from Prochlorococcus marinus (strain MIT 9301).